The following is a 453-amino-acid chain: Tubulin alpha-13 chain (453 aa).

Residue Q11 participates in GTP binding. K40 bears the N6-acetyllysine mark. The GTP site is built by E71, S140, G144, T145, T179, N206, and N228. E71 is a Mg(2+) binding site. E254 is an active-site residue. A disordered region spans residues 429–453; it reads EKDYEEVGTESQEGDGEEGEDGGDQ. The span at 431–453 shows a compositional bias: acidic residues; the sequence is DYEEVGTESQEGDGEEGEDGGDQ.

It belongs to the tubulin family. Dimer of alpha and beta chains. A typical microtubule is a hollow water-filled tube with an outer diameter of 25 nm and an inner diameter of 15 nM. Alpha-beta heterodimers associate head-to-tail to form protofilaments running lengthwise along the microtubule wall with the beta-tubulin subunit facing the microtubule plus end conferring a structural polarity. Microtubules usually have 13 protofilaments but different protofilament numbers can be found in some organisms and specialized cells. It depends on Mg(2+) as a cofactor. In terms of processing, acetylation of alpha chains at Lys-40 stabilizes microtubules and affects affinity and processivity of microtubule motors. This modification has a role in multiple cellular functions, ranging from cell motility, cell cycle progression or cell differentiation to intracellular trafficking and signaling.

It localises to the cytoplasm. Its subcellular location is the cytoskeleton. The catalysed reaction is GTP + H2O = GDP + phosphate + H(+). Tubulin is the major constituent of microtubules, a cylinder consisting of laterally associated linear protofilaments composed of alpha- and beta-tubulin heterodimers. Microtubules grow by the addition of GTP-tubulin dimers to the microtubule end, where a stabilizing cap forms. Below the cap, tubulin dimers are in GDP-bound state, owing to GTPase activity of alpha-tubulin. The polypeptide is Tubulin alpha-13 chain (TUBA13) (Naegleria pringsheimi (Amoeba)).